We begin with the raw amino-acid sequence, 197 residues long: Phospholipid hydroperoxide glutathione peroxidase (197 aa).

S40 carries the phosphoserine modification. U73 is an active-site residue. Position 73 (U73) is a non-standard amino acid, selenocysteine. V78 carries the phosphoserine modification.

This sequence belongs to the glutathione peroxidase family. In terms of assembly, monomer. Has a tendency to form higher mass oligomers. Interacts with FUNDC1; this interaction promotes GPX4 recruitment into mitochondria through TOM/TIM complex where it is degraded by mitophagy. In terms of tissue distribution, present primarily in testis. Expressed in flagella of epididymal sperm. Isoform Cytoplasmic: Highly expressed in testis. Present in spermatogonia, spermatocyte and spermatid (at protein level).

The protein localises to the nucleus. It localises to the nucleolus. Its subcellular location is the mitochondrion. The protein resides in the cytoplasm. The catalysed reaction is a hydroperoxy polyunsaturated fatty acid + 2 glutathione = a hydroxy polyunsaturated fatty acid + glutathione disulfide + H2O. It catalyses the reaction 2 glutathione + H2O2 = glutathione disulfide + 2 H2O. The enzyme catalyses tert-butyl hydroperoxide + 2 glutathione = tert-butanol + glutathione disulfide + H2O. It carries out the reaction cumene hydroperoxide + 2 glutathione = 2-phenylpropan-2-ol + glutathione disulfide + H2O. The catalysed reaction is (9S)-hydroperoxy-(10E,12Z)-octadecadienoate + 2 glutathione = (9S)-hydroxy-(10E,12Z)-octadecadienoate + glutathione disulfide + H2O. It catalyses the reaction (13S)-hydroperoxy-(9Z,11E)-octadecadienoate + 2 glutathione = (13S)-hydroxy-(9Z,11E)-octadecadienoate + glutathione disulfide + H2O. The enzyme catalyses (5S)-hydroperoxy-(6E,8Z,11Z,14Z)-eicosatetraenoate + 2 glutathione = (5S)-hydroxy-(6E,8Z,11Z,14Z)-eicosatetraenoate + glutathione disulfide + H2O. It carries out the reaction (12R)-hydroperoxy-(5Z,8Z,10E,14Z)-eicosatetraenoate + 2 glutathione = (12R)-hydroxy-(5Z,8Z,10E,14Z)-eicosatetraenoate + glutathione disulfide + H2O. The catalysed reaction is (12S)-hydroperoxy-(5Z,8Z,10E,14Z)-eicosatetraenoate + 2 glutathione = (12S)-hydroxy-(5Z,8Z,10E,14Z)-eicosatetraenoate + glutathione disulfide + H2O. It catalyses the reaction (15S)-hydroperoxy-(5Z,8Z,11Z,13E)-eicosatetraenoate + 2 glutathione = (15S)-hydroxy-(5Z,8Z,11Z,13E)-eicosatetraenoate + glutathione disulfide + H2O. The enzyme catalyses (5S)-hydroperoxy-(6E,8Z,11Z,14Z,17Z)-eicosapentaenoate + 2 glutathione = (5S)-hydroxy-(6E,8Z,11Z,14Z,17Z)-eicosapentaenoate + glutathione disulfide + H2O. It carries out the reaction (12S)-hydroperoxy-(5Z,8Z,10E,14Z,17Z)-eicosapentaenoate + 2 glutathione = (12S)-hydroxy-(5Z,8Z,10E,14Z,17Z)-eicosapentaenoate + glutathione disulfide + H2O. The catalysed reaction is (15S)-hydroperoxy-(5Z,8Z,11Z,13E,17Z)-eicosapentaenoate + 2 glutathione = (15S)-hydroxy-(5Z,8Z,11Z,13E,17Z)-eicosapentaenoate + glutathione disulfide + H2O. It catalyses the reaction (15S)-hydroperoxy-(11Z,13E)-eicosadienoate + 2 glutathione = (15S)-hydroxy-(11Z,13E)-eicosadienoate + glutathione disulfide + H2O. The enzyme catalyses (17S)-hydroperoxy-(4Z,7Z,10Z,13Z,15E,19Z)-docosahexaenoate + 2 glutathione = (17S)-hydroxy-(4Z,7Z,10Z,13Z,15E,19Z)-docosahexaenoate + glutathione disulfide + H2O. It carries out the reaction a hydroperoxy-1,2-diacyl-glycero-3-phosphocholine + 2 glutathione = a hydroxy-1,2-diacyl-glycero-3-phosphocholine + glutathione disulfide + H2O. Essential antioxidant peroxidase that directly reduces phospholipid hydroperoxide even if they are incorporated in membranes and lipoproteins. Can also reduce fatty acid hydroperoxide, cholesterol hydroperoxide and thymine hydroperoxide. Plays a key role in protecting cells from oxidative damage by preventing membrane lipid peroxidation. Required to prevent cells from ferroptosis, a non-apoptotic cell death resulting from an iron-dependent accumulation of lipid reactive oxygen species. The presence of selenocysteine (Sec) versus Cys at the active site is essential for life: it provides resistance to overoxidation and prevents cells against ferroptosis. The presence of Sec at the active site is also essential for the survival of a specific type of parvalbumin-positive interneurons, thereby preventing against fatal epileptic seizures. May be required to protect cells from the toxicity of ingested lipid hydroperoxides. Required for normal sperm development and male fertility. Essential for maturation and survival of photoreceptor cells. Plays a role in a primary T-cell response to viral and parasitic infection by protecting T-cells from ferroptosis and by supporting T-cell expansion. Plays a role of glutathione peroxidase in platelets in the arachidonic acid metabolism. Reduces hydroperoxy ester lipids formed by a 15-lipoxygenase that may play a role as down-regulator of the cellular 15-lipoxygenase pathway. Can also reduce small soluble hydroperoxides such as H2O2, cumene hydroperoxide and tert-butyl hydroperoxide. Functionally, specifically able to suppress the production of leukotriene and prostaglandin in response to several stimuli by reducing fatty acid hydroperoxide. In terms of biological role, specifically required to prevent mitochondrial cell death by mediating reduction of cardiolipin hydroperoxide. Also required for normal sperm development and male fertility. Its function is as follows. Required for male fertility by stabilizing the condensed chromatin in sperm nuclei. The polypeptide is Phospholipid hydroperoxide glutathione peroxidase (Rattus norvegicus (Rat)).